A 176-amino-acid chain; its full sequence is Large ribosomal subunit protein uL6 (176 aa).

This sequence belongs to the universal ribosomal protein uL6 family. As to quaternary structure, part of the 50S ribosomal subunit.

In terms of biological role, this protein binds to the 23S rRNA, and is important in its secondary structure. It is located near the subunit interface in the base of the L7/L12 stalk, and near the tRNA binding site of the peptidyltransferase center. This is Large ribosomal subunit protein uL6 from Lacticaseibacillus paracasei (strain ATCC 334 / BCRC 17002 / CCUG 31169 / CIP 107868 / KCTC 3260 / NRRL B-441) (Lactobacillus paracasei).